The primary structure comprises 689 residues: MEQRHSLAGNCDDGEKSEREAQGFEHRTCMDSGDPSFGQNDPPTILPITAPKTYDSLTSQDMPETLTDTQALHEEQFHLLDQNGQPIQYDLQSLGNSTAQMTGMEQVAIPQEPFADEHSPQDISEEKPTGVRADVLEDSTSNYGLRSPASLVLPKKAGARLVEEPLLAPLQPLSCNTPMWACRLRSCEKIGDSYRGYCVSETELESVLTFHKQQTQTVWGTRQSPSPAKPATRLMWKSQYVPYDGIPFVNAGSRAVVMECQYGPRRKGFQLKKISEQESRSCHLYKATCPARIYIKKVQKFPEYRVPTDPQIDRKIIRLEQEKAFTMLKKNLMDAGGVLRWYVQLPTQQAHQYHESETPGVPLSPSPFPMSPLEEEEAIVRDENCALPSRLHPQVAHKIQELVSQGVGQVYAVRKQLRKFVERELFKPDEIPERHNLSYFPTVNDIKNHIHEVQKSLRTGDVVYNSEIIPATLQWTTDSGNILRETVTVTFAEGNLLGEPIPSKMGTSQTQTAVSPEPLSSFPPKIFTHFQALKLQPRLSSPDGSQALVSVDSHASSSPPGLVDTVGNAEVDNHSVLLGQSQNPGTDTCLTQDNSTSSSTGHLPESVPNPVAEDQLLEGEDVEDAGNPEGSVNRTLLGDVQTVPIQIIDSRPVLVEESLSKNQVKQETNEPTLSTEAKTFLDCKKISAT.

Disordered stretches follow at residues 1–46 (MEQR…PTIL) and 541–609 (SPDG…SVPN). Positions 13-29 (DGEKSEREAQGFEHRTC) are enriched in basic and acidic residues. Polar residues-rich tracts occupy residues 541 to 559 (SPDGSQALVSVDSHASSSP) and 578 to 601 (LGQSQNPGTDTCLTQDNSTSSSTG).

As to expression, highly expressed in brain and testis.

Its subcellular location is the nucleus. Its function is as follows. Acts as a transcriptional activator that mediates the calcium- and neuron-selective induction of BDNF exon III transcription. Binds to the consensus calcium-response element CaRE1 5'-CTATTTCGAG-3' sequence. This Mus musculus (Mouse) protein is Calcium-responsive transcription factor (Carf).